We begin with the raw amino-acid sequence, 393 residues long: MTDVALPTAAPAAFDLPPDSVGVVAPQRMHFAEPLKLRNGSSIAGYDLMVETYGTLNAARSNAVLVCHALNASHHVAGVYAEDPRDVGWWDNMVGPGKPLDTNRFFVIGVNNLGSCFGSTGPMSLNPATGAPYGAAFPVVTVEDWVNAQALVADAFGITQFAAVMGGSLGGMQAVAWSLLYPERLRHCIVVASTPKLSAQNIAFNEVARSAILSDPDFHGGNYYAHGVKPKRGLRVARMIGHITYLSDEDMAEKFGRELKTDDIRFSFDVEFQVESYLRYQGDKFAEYFDANTYLLITRALDYFDPALAFGGDLTRAMAQTQASFLVASFGTDWRFAPSRSRELVKALLDNKRPVSYAEIDAPHGHDAFLLDDPRYHNLMRAYYDRIAEEIGA.

An AB hydrolase-1 domain is found at 62-372; sequence NAVLVCHALN…PHGHDAFLLD (311 aa). Catalysis depends on serine 168, which acts as the Nucleophile. Arginine 238 contributes to the substrate binding site. Active-site residues include aspartate 333 and histidine 366. Residue aspartate 367 coordinates substrate.

It belongs to the AB hydrolase superfamily. MetX family. As to quaternary structure, homodimer.

The protein localises to the cytoplasm. It catalyses the reaction L-homoserine + succinyl-CoA = O-succinyl-L-homoserine + CoA. It functions in the pathway amino-acid biosynthesis; L-methionine biosynthesis via de novo pathway; O-succinyl-L-homoserine from L-homoserine: step 1/1. Transfers a succinyl group from succinyl-CoA to L-homoserine, forming succinyl-L-homoserine. The sequence is that of Homoserine O-succinyltransferase from Cupriavidus necator (strain ATCC 17699 / DSM 428 / KCTC 22496 / NCIMB 10442 / H16 / Stanier 337) (Ralstonia eutropha).